The sequence spans 119 residues: NADH dehydrogenase [ubiquinone] 1 subunit C2 (119 aa).

The chain crosses the membrane as a helical span at residues 56–75; it reads GLHRQLLYITAFFFAGYYLV.

The protein belongs to the complex I NDUFC2 subunit family. As to quaternary structure, complex I is composed of 45 different subunits. Interacts with TMEM242.

Its subcellular location is the mitochondrion inner membrane. Its function is as follows. Accessory subunit of the mitochondrial membrane respiratory chain NADH dehydrogenase (Complex I), that is believed not to be involved in catalysis but required for the complex assembly. Complex I functions in the transfer of electrons from NADH to the respiratory chain. The immediate electron acceptor for the enzyme is believed to be ubiquinone. The protein is NADH dehydrogenase [ubiquinone] 1 subunit C2 of Gorilla gorilla gorilla (Western lowland gorilla).